The sequence spans 569 residues: CTP synthase (569 aa).

The amidoligase domain stretch occupies residues 1-276 (MNQATPTKHV…DAYLVRRLDL (276 aa)). Ser-18 provides a ligand contact to CTP. Residue Ser-18 coordinates UTP. Residues 19 to 24 (SLGKGL) and Asp-76 each bind ATP. 2 residues coordinate Mg(2+): Asp-76 and Glu-150. Residues 157 to 159 (DIE), 197 to 202 (KTKPTQ), and Lys-233 contribute to the CTP site. Residues 197–202 (KTKPTQ) and Lys-233 contribute to the UTP site. Residues 301–550 (TVALVGKYVD…VGAAIERQRE (250 aa)) enclose the Glutamine amidotransferase type-1 domain. Gly-364 provides a ligand contact to L-glutamine. Catalysis depends on Cys-391, which acts as the Nucleophile; for glutamine hydrolysis. L-glutamine-binding positions include 392-395 (LGLQ), Glu-415, and Arg-476. Active-site residues include His-523 and Glu-525.

Belongs to the CTP synthase family. As to quaternary structure, homotetramer.

It carries out the reaction UTP + L-glutamine + ATP + H2O = CTP + L-glutamate + ADP + phosphate + 2 H(+). The catalysed reaction is L-glutamine + H2O = L-glutamate + NH4(+). The enzyme catalyses UTP + NH4(+) + ATP = CTP + ADP + phosphate + 2 H(+). Its pathway is pyrimidine metabolism; CTP biosynthesis via de novo pathway; CTP from UDP: step 2/2. Its activity is regulated as follows. Allosterically activated by GTP, when glutamine is the substrate; GTP has no effect on the reaction when ammonia is the substrate. The allosteric effector GTP functions by stabilizing the protein conformation that binds the tetrahedral intermediate(s) formed during glutamine hydrolysis. Inhibited by the product CTP, via allosteric rather than competitive inhibition. In terms of biological role, catalyzes the ATP-dependent amination of UTP to CTP with either L-glutamine or ammonia as the source of nitrogen. Regulates intracellular CTP levels through interactions with the four ribonucleotide triphosphates. This is CTP synthase from Nocardioides sp. (strain ATCC BAA-499 / JS614).